The following is a 240-amino-acid chain: uncharacterized protein (240 aa).

Catalysis depends on aspartate 66, which acts as the Proton acceptor. The active site involves aspartate 129. The active-site Proton acceptor is histidine 131.

Belongs to the glucosamine/galactosamine-6-phosphate isomerase family.

This is an uncharacterized protein from Escherichia coli (strain K12).